We begin with the raw amino-acid sequence, 55 residues long: MDKPTVETSAAPVETLVLTEPPAETQAEDSVSSVLAGLTAAIETVDRLRTAFGAE.

Residues Met-1–Ser-30 form a disordered region.

This is an uncharacterized protein from Frog virus 3 (isolate Goorha) (FV-3).